The sequence spans 528 residues: Glycerol kinase 5 (528 aa).

ATP-binding residues include Ser28 and Ser29. 3 residues coordinate glycerol: Arg98, Asp275, and Gln276. Residues Thr297, Gly340, and Gly440 each contribute to the ATP site.

It belongs to the FGGY kinase family.

The protein resides in the cytoplasm. The catalysed reaction is glycerol + ATP = sn-glycerol 3-phosphate + ADP + H(+). It participates in polyol metabolism; glycerol degradation via glycerol kinase pathway; sn-glycerol 3-phosphate from glycerol: step 1/1. Skin-specific kinase that plays a key role in glycerol metabolism, catalyzing its phosphorylation to produce sn-glycerol 3-phosphate. Involved in skin-specific regulation of sterol regulatory element-binding protein (SREBP) processing and lipid biosynthesis. The sequence is that of Glycerol kinase 5 (GK5) from Bos taurus (Bovine).